A 388-amino-acid polypeptide reads, in one-letter code: Chorismate synthase (388 aa).

NADP(+) contacts are provided by Arg-39 and Arg-45. FMN is bound by residues 130–132, 251–252, Gly-296, 311–315, and Arg-337; these read RSS, NA, and KPIPT.

This sequence belongs to the chorismate synthase family. In terms of assembly, homotetramer. The cofactor is FMNH2.

The catalysed reaction is 5-O-(1-carboxyvinyl)-3-phosphoshikimate = chorismate + phosphate. Its pathway is metabolic intermediate biosynthesis; chorismate biosynthesis; chorismate from D-erythrose 4-phosphate and phosphoenolpyruvate: step 7/7. Functionally, catalyzes the anti-1,4-elimination of the C-3 phosphate and the C-6 proR hydrogen from 5-enolpyruvylshikimate-3-phosphate (EPSP) to yield chorismate, which is the branch point compound that serves as the starting substrate for the three terminal pathways of aromatic amino acid biosynthesis. This reaction introduces a second double bond into the aromatic ring system. The sequence is that of Chorismate synthase from Streptococcus pyogenes serotype M2 (strain MGAS10270).